The primary structure comprises 281 residues: Digeranylgeranylglyceryl phosphate synthase (281 aa).

The next 5 helical transmembrane spans lie at 88 to 108, 132 to 152, 200 to 220, 225 to 245, and 261 to 281; these read IALS…EFLI, ALVS…AGNL, GILV…PVIF, IIYL…ASAI, and LIKV…FRVV.

It belongs to the UbiA prenyltransferase family. DGGGP synthase subfamily. Mg(2+) serves as cofactor.

It localises to the cell membrane. The catalysed reaction is sn-3-O-(geranylgeranyl)glycerol 1-phosphate + (2E,6E,10E)-geranylgeranyl diphosphate = 2,3-bis-O-(geranylgeranyl)-sn-glycerol 1-phosphate + diphosphate. It participates in membrane lipid metabolism; glycerophospholipid metabolism. Its function is as follows. Prenyltransferase that catalyzes the transfer of the geranylgeranyl moiety of geranylgeranyl diphosphate (GGPP) to the C2 hydroxyl of (S)-3-O-geranylgeranylglyceryl phosphate (GGGP). This reaction is the second ether-bond-formation step in the biosynthesis of archaeal membrane lipids. The protein is Digeranylgeranylglyceryl phosphate synthase of Korarchaeum cryptofilum (strain OPF8).